The following is a 376-amino-acid chain: 23S rRNA (uracil(747)-C(5))-methyltransferase RlmC (376 aa).

4 residues coordinate [4Fe-4S] cluster: Cys3, Cys11, Cys14, and Cys87. S-adenosyl-L-methionine contacts are provided by Gln212, Phe241, Glu262, and Asn307. The Nucleophile role is filled by Cys334.

Belongs to the class I-like SAM-binding methyltransferase superfamily. RNA M5U methyltransferase family. RlmC subfamily.

The catalysed reaction is uridine(747) in 23S rRNA + S-adenosyl-L-methionine = 5-methyluridine(747) in 23S rRNA + S-adenosyl-L-homocysteine + H(+). Its function is as follows. Catalyzes the formation of 5-methyl-uridine at position 747 (m5U747) in 23S rRNA. This Salmonella newport (strain SL254) protein is 23S rRNA (uracil(747)-C(5))-methyltransferase RlmC.